Reading from the N-terminus, the 272-residue chain is Phosphoribosylformylglycinamidine synthase subunit PurQ (272 aa).

A Glutamine amidotransferase type-1 domain is found at Val-8–Glu-243. The Nucleophile role is filled by Cys-98. Catalysis depends on residues His-225, Glu-227, and Glu-235.

As to quaternary structure, part of the FGAM synthase complex composed of 1 PurL, 1 PurQ and 2 PurS subunits.

It is found in the cytoplasm. It carries out the reaction N(2)-formyl-N(1)-(5-phospho-beta-D-ribosyl)glycinamide + L-glutamine + ATP + H2O = 2-formamido-N(1)-(5-O-phospho-beta-D-ribosyl)acetamidine + L-glutamate + ADP + phosphate + H(+). The enzyme catalyses L-glutamine + H2O = L-glutamate + NH4(+). It functions in the pathway purine metabolism; IMP biosynthesis via de novo pathway; 5-amino-1-(5-phospho-D-ribosyl)imidazole from N(2)-formyl-N(1)-(5-phospho-D-ribosyl)glycinamide: step 1/2. Functionally, part of the phosphoribosylformylglycinamidine synthase complex involved in the purines biosynthetic pathway. Catalyzes the ATP-dependent conversion of formylglycinamide ribonucleotide (FGAR) and glutamine to yield formylglycinamidine ribonucleotide (FGAM) and glutamate. The FGAM synthase complex is composed of three subunits. PurQ produces an ammonia molecule by converting glutamine to glutamate. PurL transfers the ammonia molecule to FGAR to form FGAM in an ATP-dependent manner. PurS interacts with PurQ and PurL and is thought to assist in the transfer of the ammonia molecule from PurQ to PurL. This Methanococcus maripaludis (strain C7 / ATCC BAA-1331) protein is Phosphoribosylformylglycinamidine synthase subunit PurQ.